The chain runs to 247 residues: Putative ankyrin repeat protein RBE_1110 (247 aa).

2 ANK repeats span residues 105–135 and 139–171; these read QNKDVFYQAVMSNKKKLVKKILSYNPKCIDY and EGHNVLHIALKNKAKADAEMIEILLQCKPKLIT.

This Rickettsia bellii (strain RML369-C) protein is Putative ankyrin repeat protein RBE_1110.